Reading from the N-terminus, the 309-residue chain is Zinc transporter ZIPB (309 aa).

The Periplasmic segment spans residues 1–22 (MNQPSSLAADLRGAWHAQAQSH). The chain crosses the membrane as a helical span at residues 23 to 50 (PLITLGLAASAAGVVLLLVAGIVNALTG). At 51-55 (ENRVH) the chain is on the extracellular side. A helical membrane pass occupies residues 56 to 81 (VGYAVLGGAAGFAATALGALMALGLR). At 82–83 (AI) the chain is on the periplasmic side. The helical transmembrane segment at 84–119 (SARTQDAMLGFAAGMMLAASAFSLILPGLDAAGTIV) threads the bilayer. Position 89 (Asp89) interacts with Zn(2+). Met99 provides a ligand contact to Cd(2+). Residues 120–121 (GP) are Extracellular-facing. The helical transmembrane segment at 122-145 (GPAAAAVVALGLGLGVLLMLGLDY) threads the bilayer. Asp144 contacts Zn(2+). Asp144 contributes to the Cd(2+) binding site. Over 146–165 (FTPHEHERTGHQGPEAARVN) the chain is Periplasmic. Residues 166–190 (RVWLFVLTIILHNLPEGMAIGVSFA) form a helical membrane-spanning segment. His177 contacts Zn(2+). His177, Asn178, and Glu181 together coordinate Cd(2+). Position 181 (Glu181) interacts with Zn(2+). At 191-192 (TG) the chain is on the extracellular side. A helical membrane pass occupies residues 193-222 (DLRIGLPLTSAIAIQDVPEGLAVALALRAV). Residue Gln207 coordinates Zn(2+). Gln207, Asp208, and Glu211 together coordinate Cd(2+). A Zn(2+)-binding site is contributed by Glu211. The Periplasmic portion of the chain corresponds to 223 to 224 (GL). Residues 225 to 251 (PIGRAVLVAVASGLMEPLGALVGVGIS) traverse the membrane as a helical segment. Residue Glu240 coordinates Cd(2+). Residues 252–255 (SGFA) lie on the Extracellular side of the membrane. The helical transmembrane segment at 256-275 (LAYPISMGLAAGAMIFVVSH) threads the bilayer. Residues His275, Glu276, and His286 each contribute to the Zn(2+) site. His275 provides a ligand contact to Cd(2+). The Periplasmic segment spans residues 276 to 287 (EVIPETHRNGHE). The chain crosses the membrane as a helical span at residues 288–308 (TTATVGLMAGFALMMFLDTAL). A topological domain (extracellular) is located at residue Gly309.

Belongs to the ZIP transporter (TC 2.A.5) family. As to quaternary structure, homodimer. Also exists as a monomer.

The protein resides in the cell inner membrane. The catalysed reaction is Zn(2+)(in) = Zn(2+)(out). It catalyses the reaction Cd(2+)(in) = Cd(2+)(out). Its function is as follows. Selective electrodiffusional channel that mediates the uptake of Zn(2+). Exploits in vivo zinc concentration gradients (maintained by cellular zinc homeostasis) to passively move zinc ions into the cytoplasm. ZIPB-mediated zinc flux is dependent upon pH, but independent of the proton motive force. Is also able to import Cd(2+), but is not permeable to Co(2+), Cu(2+), Fe(2+), Mn(2+) and Ni(2+). This chain is Zinc transporter ZIPB, found in Bordetella bronchiseptica (strain ATCC BAA-588 / NCTC 13252 / RB50) (Alcaligenes bronchisepticus).